Reading from the N-terminus, the 110-residue chain is Protein YcgL (110 aa).

The YcgL domain maps to 14-98; it reads MFCVIYRSSK…PPEDLLKQHL (85 aa). The tract at residues 87 to 110 is disordered; the sequence is PPPPEDLLKQHLSSVGQNTSSADR. Residues 97–110 show a composition bias toward polar residues; the sequence is HLSSVGQNTSSADR.

The polypeptide is Protein YcgL (Salmonella newport (strain SL254)).